The sequence spans 429 residues: Zinc-regulated GTPase metalloprotein activator 1 (429 aa).

Residues 15 to 22 (GELPCLVT) carry the psi-PxLVp motif motif. 78–85 (GYLGSGKS) contributes to the GTP binding site. 3 residues coordinate Zn(2+): Cys-136, Cys-138, and Cys-139. Residues 136–139 (CLCC) carry the CXCC motif motif. Residues 139 to 143 (CSLKN) and 244 to 247 (NKYD) each bind GTP. The region spanning 362–428 (RDWEVQRTKG…SIEELLRKTL (67 aa)) is the CobW C-terminal domain.

This sequence belongs to the SIMIBI class G3E GTPase family. ZNG1 subfamily.

The catalysed reaction is GTP + H2O = GDP + phosphate + H(+). Functionally, zinc chaperone that directly transfers zinc cofactor to target metalloproteins, thereby activating them. Catalyzes zinc insertion into the active site of methionine aminopeptidase MAP1, which function to cleave the initiator methionine from polypeptides during or after protein translation. Mechanistically, the N-terminal psi-PxLVp motif binds to the C6H2-type zinc finger of inactive form of MAP1. After formation of the docked complex, zinc is transferred from the CXCC motif in the GTPase domain of ZNG1 to the zinc binding site in the peptidase domain of MAP1 in a process requiring GTP hydrolysis. GTP/GDP exchange is required for release of active MAP1. The protein is Zinc-regulated GTPase metalloprotein activator 1 of Saccharomyces cerevisiae (strain ATCC 204508 / S288c) (Baker's yeast).